Here is a 354-residue protein sequence, read N- to C-terminus: MHVTVSEILERFQPEGLITNHIGPDSVITRVAPIEDCAPGDLVFIDKPKYVGDVLQRKPAAVLTTPAIAAEFGESPALAVLIAPNVRLAIALIKQAYADRDVRDTEWPRIHPSAVIHASVEVPADAIIGPGVVIGADVVLGRGVVLMANVVIERGARIGAETVLHPGVTVCIDCEIGAGCILKPGCVIGSEGFGFAQDAQRRNYRIPHTGKVIIEDRVVIGANTTIDRATYGATVVRSGTIIDALVHLGHNVEIGEDCILCAHTGLSGSTRFGKRVIATGQTGTIDHITVADDSVLLHRAGLNTSIKQPGMYAGGPAQPLQQYLKNMAVMPRLHEIWSRLKKLEKAVAQLGSAE.

Catalysis depends on His-250, which acts as the Proton acceptor.

It belongs to the transferase hexapeptide repeat family. LpxD subfamily. As to quaternary structure, homotrimer.

The catalysed reaction is a UDP-3-O-[(3R)-3-hydroxyacyl]-alpha-D-glucosamine + a (3R)-hydroxyacyl-[ACP] = a UDP-2-N,3-O-bis[(3R)-3-hydroxyacyl]-alpha-D-glucosamine + holo-[ACP] + H(+). It participates in bacterial outer membrane biogenesis; LPS lipid A biosynthesis. In terms of biological role, catalyzes the N-acylation of UDP-3-O-acylglucosamine using 3-hydroxyacyl-ACP as the acyl donor. Is involved in the biosynthesis of lipid A, a phosphorylated glycolipid that anchors the lipopolysaccharide to the outer membrane of the cell. In Methylococcus capsulatus (strain ATCC 33009 / NCIMB 11132 / Bath), this protein is UDP-3-O-acylglucosamine N-acyltransferase.